The following is a 322-amino-acid chain: ATP-dependent 6-phosphofructokinase (322 aa).

Residue Gly11 coordinates ATP. 21 to 25 (RAVVR) is an ADP binding site. ATP-binding positions include 72 to 73 (RC) and 102 to 105 (GDGS). Position 103 (Asp103) interacts with Mg(2+). 127 to 129 (TID) contributes to the substrate binding site. Asp129 functions as the Proton acceptor in the catalytic mechanism. Arg156 contributes to the ADP binding site. Substrate-binding positions include Arg164 and 171–173 (MGR). Residues 187-189 (GAE), Arg213, and 215-217 (KKH) contribute to the ADP site. Substrate-binding positions include Glu224, Arg245, and 251–254 (HIQR).

Belongs to the phosphofructokinase type A (PFKA) family. ATP-dependent PFK group I subfamily. Prokaryotic clade 'B1' sub-subfamily. Homotetramer. The cofactor is Mg(2+).

It is found in the cytoplasm. The enzyme catalyses beta-D-fructose 6-phosphate + ATP = beta-D-fructose 1,6-bisphosphate + ADP + H(+). Its pathway is carbohydrate degradation; glycolysis; D-glyceraldehyde 3-phosphate and glycerone phosphate from D-glucose: step 3/4. With respect to regulation, allosterically activated by ADP and other diphosphonucleosides, and allosterically inhibited by phosphoenolpyruvate. Functionally, catalyzes the phosphorylation of D-fructose 6-phosphate to fructose 1,6-bisphosphate by ATP, the first committing step of glycolysis. The polypeptide is ATP-dependent 6-phosphofructokinase (Staphylococcus carnosus (strain TM300)).